The following is a 143-amino-acid chain: Nucleoside diphosphate kinase (143 aa).

6 residues coordinate ATP: lysine 11, phenylalanine 59, arginine 87, threonine 93, arginine 104, and asparagine 114. Histidine 117 (pros-phosphohistidine intermediate) is an active-site residue.

It belongs to the NDK family. As to quaternary structure, homotetramer. The cofactor is Mg(2+).

Its subcellular location is the cytoplasm. The catalysed reaction is a 2'-deoxyribonucleoside 5'-diphosphate + ATP = a 2'-deoxyribonucleoside 5'-triphosphate + ADP. It catalyses the reaction a ribonucleoside 5'-diphosphate + ATP = a ribonucleoside 5'-triphosphate + ADP. Functionally, major role in the synthesis of nucleoside triphosphates other than ATP. The ATP gamma phosphate is transferred to the NDP beta phosphate via a ping-pong mechanism, using a phosphorylated active-site intermediate. The protein is Nucleoside diphosphate kinase of Shewanella amazonensis (strain ATCC BAA-1098 / SB2B).